Here is a 208-residue protein sequence, read N- to C-terminus: Protein-L-isoaspartate O-methyltransferase (208 aa).

Residue Ser-59 is part of the active site.

Belongs to the methyltransferase superfamily. L-isoaspartyl/D-aspartyl protein methyltransferase family.

It is found in the cytoplasm. It carries out the reaction [protein]-L-isoaspartate + S-adenosyl-L-methionine = [protein]-L-isoaspartate alpha-methyl ester + S-adenosyl-L-homocysteine. Its function is as follows. Catalyzes the methyl esterification of L-isoaspartyl residues in peptides and proteins that result from spontaneous decomposition of normal L-aspartyl and L-asparaginyl residues. It plays a role in the repair and/or degradation of damaged proteins. This chain is Protein-L-isoaspartate O-methyltransferase, found in Proteus mirabilis (strain HI4320).